Consider the following 306-residue polypeptide: MHSPNKFTSGPKQFLESEAITSYADAAVVVVPIPYEATTSYRKGCEHGPEAVLEASDQLEAYDEELGTSPCHDLGIYTCAPLADSNKHPALAGDAMVTEVCDGIAPFVEDGKFVVAIGGEHAITTGVVRAMQRGTSEPFTVVQIDAHGDMRDKFEGSCHNHACVMRRVLELGLPTLPIAIRAICQEEADLIREKNIPVFWAREMADNPNWINEAIASITTQKVFLTIDMDGFDPGFMPGVGTPEPGGLGWYEGLNFFRRLFQTKQVIGCDLMELAPVRGSVVSEFSTAKLAYKLMGYWGESQRKKL.

Mn(2+)-binding residues include H121, D145, H147, D149, D228, and D230.

The protein belongs to the arginase family. Mn(2+) serves as cofactor.

It catalyses the reaction N(1)-(3-aminopropyl)agmatine + H2O = urea + spermidine. Its pathway is amine and polyamine biosynthesis; spermidine biosynthesis. In terms of biological role, ureohydrolase involved in the biosynthesis of spermidine via the carboxyaminopropylagmatine (CAPA) pathway. Catalyzes the conversion of aminopropylagmatine (APA) to spermidine and urea. Is highly specific to APA and incapable of releasing measurable urea from CAPA, agmatine, arginine, guanidine, guanidinobutyrate and guanidinopropionate. This Synechocystis sp. (strain ATCC 27184 / PCC 6803 / Kazusa) protein is N(1)-aminopropylagmatine ureohydrolase.